Here is an 896-residue protein sequence, read N- to C-terminus: MIQQYLHIKAQYPDAFLFFRLGDFYELFFDDAIKAAQELEITLTSRDGGDERVPMCGVPYHSAQGYIEQLIEKGYKVAICEQVEDPKTAKGVVRREVVQLITPGTLMEGKGLTEKENHYLAALTPFADGTYGLAYADLSTGEVRLTLLSSWEEAANELHAVGAREIIVATDSGEEWVRELKERYGAAVSYEDDTSLCDEWNGVIGHVAQEKLRQAAARLLHYLVRTQKRRLDHLQPAELYQVDHYMKMDRHSKLHLELVETVRSKGRKGSLLWLLDETVTAMGGRLLKQWLDRPLIDRREIERRLDFVETLKTSYFERQELRDRLRGVYDIERLVGRVSYGNANARDLVQLKKSLLQVPALRQTVGALPLAEADKLCERLDPCEELVDLLERSIQEQPPLSVKEGNLIKDGYDKQLDRYRDASRNGKAWIAELEAKEREATGIKSLKVGYNRVFGYYIEVTKPNLPLVPEGRYERKQTLANAERFITPELKEKEALILEAEEKSIELEYELFVAIREQVKQYIPRLQTLAKAIAELDVLQSFATISDEYRYVRPQFSTERVLVIQGGRHPVVEKVLGAQMYVPNDCYMNREREMLLITGPNMAGKSTYMRQVALTAVMAQIGCFVPAERAVLPIFDQVFTRIGAADDLSAGQSTFMVEMLEARHAIAHATQNSLILFDEIGRGTSTYDGMALAQAIIEYIHDHIGAKTLFSTHYHELTALERSLPRLSNVHARAIEENGKVVFLHQIADGPADKSYGIHVAELAGLPASLIERARAILAELEKAAGKQEAAAGRMDDGALAEAGLAFQGNEALDVGSKVEREKASRPSAGAAREGVLAEAAFEQLSMFPDLAPAPVEPPLSSKEKKALAALKEINLLEMTPLEALNKLYELQKLLK.

599 to 606 (GPNMAGKS) provides a ligand contact to ATP.

The protein belongs to the DNA mismatch repair MutS family.

This protein is involved in the repair of mismatches in DNA. It is possible that it carries out the mismatch recognition step. This protein has a weak ATPase activity. The protein is DNA mismatch repair protein MutS of Geobacillus kaustophilus (strain HTA426).